A 214-amino-acid polypeptide reads, in one-letter code: LexA repressor (214 aa).

Residues 28-48 (IRDIQRELSISSTSVVAYNLR) constitute a DNA-binding region (H-T-H motif). Residues Ser133 and Lys172 each act as for autocatalytic cleavage activity in the active site.

Belongs to the peptidase S24 family. Homodimer.

It carries out the reaction Hydrolysis of Ala-|-Gly bond in repressor LexA.. Functionally, represses a number of genes involved in the response to DNA damage (SOS response), including recA and lexA. In the presence of single-stranded DNA, RecA interacts with LexA causing an autocatalytic cleavage which disrupts the DNA-binding part of LexA, leading to derepression of the SOS regulon and eventually DNA repair. This is LexA repressor from Herpetosiphon aurantiacus (strain ATCC 23779 / DSM 785 / 114-95).